Consider the following 201-residue polypeptide: Lipopolysaccharide core heptose(II)-phosphate phosphatase (201 aa).

The first 35 residues, 1–35 (MLAFTLRFIKNKRYLATLAGALVIIAGLTSQHAWS), serve as a signal peptide directing secretion.

The protein belongs to the phosphoglycerate mutase family. Ais subfamily.

The protein resides in the periplasm. The protein operates within bacterial outer membrane biogenesis; lipopolysaccharide metabolism. Its function is as follows. Catalyzes the dephosphorylation of heptose(II) of the outer membrane lipopolysaccharide core. The sequence is that of Lipopolysaccharide core heptose(II)-phosphate phosphatase from Salmonella newport (strain SL254).